A 198-amino-acid polypeptide reads, in one-letter code: Autophagy-related protein 16 (198 aa).

A coiled-coil region spans residues 24 to 177; sequence ELVQTCSQMA…NKELVDRWMK (154 aa).

Belongs to the ATG16 family. As to quaternary structure, homodimer. Part of the ATG5-ATG12/ATG16 complex. Several units of each may be present in this complex. Interacts directly with ATG12.

The protein resides in the preautophagosomal structure membrane. Its function is as follows. Stabilizes the ATG5-ATG12 conjugate. The ATG5-ATG12/ATG16 complex is required for efficient promotion of ATG8-conjugation to phosphatidylethanolamine and ATG8 localization to the pre-autophagosomal structure (PAS). Also recruits ATG3 to the PAS. Involved in endoplasmic reticulum-specific autophagic process and is essential for the survival of cells subjected to severe ER stress. Autophagy is required for proper vegetative growth, asexual/sexual reproduction, and full virulence. Autophagy is particularly involved in the biosynthesis of deoxynivalenol (DON), an important virulence determinant. The polypeptide is Autophagy-related protein 16 (Gibberella zeae (strain ATCC MYA-4620 / CBS 123657 / FGSC 9075 / NRRL 31084 / PH-1) (Wheat head blight fungus)).